Reading from the N-terminus, the 213-residue chain is Dimethyl sulfoxide reductase transcriptional activator (213 aa).

The region spanning 155-206 is the HTH bat-type domain; the sequence is LTAKQREAALIAVHHGYYETPRRTELATLAEALGISKSALSQRLNAVEAKLA.

Functionally, involved in activating dmsEABCD gene expression related to dimethyl sulfoxide (DMSO) reductase. Required for anaerobic respiration on dimethyl sulfoxide (DMSO). This is Dimethyl sulfoxide reductase transcriptional activator from Haloferax volcanii (strain ATCC 29605 / DSM 3757 / JCM 8879 / NBRC 14742 / NCIMB 2012 / VKM B-1768 / DS2) (Halobacterium volcanii).